The following is a 499-amino-acid chain: Serine/threonine-protein kinase RHS3 (499 aa).

Residues 1–92 form a disordered region; it reads MLLKPGNKLV…NSSKPHTGGD (92 aa). The span at 39–55 shows a compositional bias: basic and acidic residues; that stretch reads QKQVEQNTKKIEEHQIK. A compositionally biased stretch (low complexity) spans 63-85; the sequence is SNHNVNMSSQSNNSESTSTNNSS. The Protein kinase domain maps to 113–436; it reads FRVLKRLGYG…ATEIKQHPFF (324 aa). ATP-binding positions include 119-127 and Lys144; that span reads LGYGDIGSV. Asp240 acts as the Proton acceptor in catalysis. In terms of domain architecture, AGC-kinase C-terminal spans 437 to 499; sequence EGVNWALIRG…DPDYIVFEYF (63 aa).

The protein belongs to the protein kinase superfamily. AGC Ser/Thr protein kinase family. Interacts with PDPK1/PDK1. Autophosphorylated and phosphorylated by PDPK1/PDK1. In terms of tissue distribution, specifically expressed in root hair cells.

The enzyme catalyses L-seryl-[protein] + ATP = O-phospho-L-seryl-[protein] + ADP + H(+). The catalysed reaction is L-threonyl-[protein] + ATP = O-phospho-L-threonyl-[protein] + ADP + H(+). Activated by PDPK1/PDK1. Involved in root hair growth and morphogenesis. The chain is Serine/threonine-protein kinase RHS3 from Arabidopsis thaliana (Mouse-ear cress).